A 164-amino-acid chain; its full sequence is Large ribosomal subunit protein bL21 (164 aa).

The tract at residues 105-164 is disordered; that stretch reads KAPTIGPRAKKEKKVEAAPADGEAPAKKAPAKKAAAKKAAPKAAAKKAPAKKAAPKAKSE. The segment covering 133-164 has biased composition (basic residues); sequence APAKKAAAKKAAPKAAAKKAPAKKAAPKAKSE.

Belongs to the bacterial ribosomal protein bL21 family. In terms of assembly, part of the 50S ribosomal subunit. Contacts protein L20.

Its function is as follows. This protein binds to 23S rRNA in the presence of protein L20. The sequence is that of Large ribosomal subunit protein bL21 from Afipia carboxidovorans (strain ATCC 49405 / DSM 1227 / KCTC 32145 / OM5) (Oligotropha carboxidovorans).